The primary structure comprises 342 residues: 6-hydroxytryprostatin B O-methyltransferase (342 aa).

Asp-201 is a binding site for S-adenosyl-L-methionine. His-244 functions as the Proton acceptor in the catalytic mechanism.

The protein belongs to the class I-like SAM-binding methyltransferase superfamily. Cation-independent O-methyltransferase family. As to quaternary structure, homodimer.

The enzyme catalyses 6-hydroxytryprostatin B + S-adenosyl-L-methionine = tryprostatin A + S-adenosyl-L-homocysteine + H(+). Its pathway is mycotoxin biosynthesis. Functionally, 6-hydroxytryprostatin B O-methyltransferase; part of the gene cluster that mediates the biosynthesis of fumitremorgins, indole alkaloids that carry not only intriguing chemical structures, but also interesting biological and pharmacological activities. The biosynthesis of fumitremorgin-type alkaloids begins by condensation of the two amino acids L-tryptophan and L-proline to brevianamide F, catalyzed by the non-ribosomal peptide synthetase ftmA. Brevianamide F is then prenylated by the prenyltransferase ftmPT1/ftmB in the presence of dimethylallyl diphosphate, resulting in the formation of tryprostatin B. The three cytochrome P450 monooxygenases, ftmP450-1/ftmC, ftmP450-2/ftmE and ftmP450-3/FtmG, are responsible for the conversion of tryprostatin B to 6-hydroxytryprostatin B, tryprostatin A to fumitremorgin C and fumitremorgin C to 12,13-dihydroxyfumitremorgin C, respectively. The putative methyltransferase ftmMT/ftmD is expected for the conversion of 6-hydroxytryprostatin B to tryprostatin A. FtmPT2/FtmH catalyzes the prenylation of 12,13-dihydroxyfumitre-morgin C in the presence of dimethylallyl diphosphate, resulting in the formation of fumitremorgin B. Fumitremorgin B is further converted to verruculogen by ftmOx1/ftmF via the insertion of an endoperoxide bond between the two prenyl moieties. In some fungal species, verruculogen is further converted to fumitremorgin A, but the enzymes involved in this step have not been identified yet. The protein is 6-hydroxytryprostatin B O-methyltransferase of Aspergillus fumigatus (strain ATCC MYA-4609 / CBS 101355 / FGSC A1100 / Af293) (Neosartorya fumigata).